The sequence spans 312 residues: MINREDLLKNPVEDIALRDLEKYSDIVNVFDKIYGFSSEGIVRGSKILKEMIKDADLRFLSFTANLVSTGLRGLFADLVKRGYFNIIVTTGGTIDHDLARSFGGVYYKGSFDIDDAMLKDLEIHRLGNVLVPFESYGKVIEEIVRKFLPEIAKDKKEIPAYELLWEFGKRISDSNSILRAAYEKKVPVIVPGIVDGSFGTNLFIQSQFLNFKINLFEDMRLIKDLVFSCKKSGALIIGGGISKHHTIWWNQFKDGLDYAVYVTTAQEYDGSLSGAKPREAISWNKIRPNAKHATIYGDATIIVPILAASLLS.

Residue Lys-285 is the Nucleophile of the active site.

Belongs to the deoxyhypusine synthase family. NAD(+) serves as cofactor.

It catalyses the reaction [eIF5A protein]-L-lysine + spermidine = [eIF5A protein]-deoxyhypusine + propane-1,3-diamine. It functions in the pathway protein modification; eIF5A hypusination. Its function is as follows. Catalyzes the NAD-dependent oxidative cleavage of spermidine and the subsequent transfer of the butylamine moiety of spermidine to the epsilon-amino group of a specific lysine residue of the eIF-5A precursor protein to form the intermediate deoxyhypusine residue. This is Probable deoxyhypusine synthase from Saccharolobus islandicus (strain M.16.4 / Kamchatka #3) (Sulfolobus islandicus).